Reading from the N-terminus, the 254-residue chain is 23S rRNA (guanosine-2'-O-)-methyltransferase RlmB (254 aa).

S-adenosyl-L-methionine contacts are provided by glycine 198, isoleucine 218, and leucine 227.

Belongs to the class IV-like SAM-binding methyltransferase superfamily. RNA methyltransferase TrmH family. RlmB subfamily. Homodimer.

It localises to the cytoplasm. It catalyses the reaction guanosine(2251) in 23S rRNA + S-adenosyl-L-methionine = 2'-O-methylguanosine(2251) in 23S rRNA + S-adenosyl-L-homocysteine + H(+). Functionally, specifically methylates the ribose of guanosine 2251 in 23S rRNA. This chain is 23S rRNA (guanosine-2'-O-)-methyltransferase RlmB, found in Blochmanniella floridana.